Reading from the N-terminus, the 250-residue chain is MADNFSLHDALSGSGNPNPQGWPGAWGNQPAGAGGYPGASYPGAYPGQAPPGAYPGQAPPGAYPGAPGAYPGAPAPGVYPGPPSGPGAYPSSGQPSATGAYPATGPYGAPAGPLIVPYNLPLPGGVVPRMLITILGTVKPNANRIALDFQRGNDVAFHFNPRFNENNRRVIVCNTKLDNNWGREERQSVFPFESGKPFKIQVLVEPDHFKVAVNDAHLLQYNHRVKKLNEISKLGISGDIDLTSASYTMI.

Residues 1-60 (MADNFSLHDALSGSGNPNPQGWPGAWGNQPAGAGGYPGASYPGAYPGQAPPGAYPGQAPP) form a disordered region. Alanine 2 carries the N-acetylalanine modification. Serine 6 and serine 12 each carry phosphoserine. Tandem repeats lie at residues 36–44 (YPGASYPGA), 45–53 (YPGQAPPGA), and 54–62 (YPGQAPPGA). Residues 36–109 (YPGASYPGAY…AYPATGPYGA (74 aa)) are 8 X 9 AA tandem repeats of Y-P-G-X(3)-P-G-A. Residues 38–47 (GASYPGAYPG) are compositionally biased toward low complexity. Over residues 48 to 60 (QAPPGAYPGQAPP) the composition is skewed to pro residues. The 4; approximate repeat unit spans residues 63 to 69 (YPGAPGA). Copy 5 of the repeat occupies 70 to 78 (YPGAPAPGV). The stretch at 79–88 (YPGPPSGPGA) is one 6; approximate repeat. One copy of the 7; approximate repeat lies at 89–100 (YPSSGQPSATGA). Residues 101-109 (YPATGPYGA) form an 8; approximate repeat. Positions 118–248 (YNLPLPGGVV…DIDLTSASYT (131 aa)) constitute a Galectin domain. 181-187 (WGREERQ) contacts a beta-D-galactoside. At serine 188 the chain carries Phosphoserine. Residues 226 to 241 (KKLNEISKLGISGDID) carry the Nuclear export signal motif.

Probably forms homo- or heterodimers. Interacts with DMBT1. Interacts with CD6 and ALCAM. Forms a complex with the ITGA3, ITGB1 and CSPG4. Interacts with LGALS3BP, LYPD3, ZFTRAF1 and UACA. Interacts with TRIM16; this interaction mediates autophagy of damage endomembranes. Interacts with cargo receptor TMED10; the interaction mediates the translocation from the cytoplasm into the ERGIC (endoplasmic reticulum-Golgi intermediate compartment) and thereby secretion. A major expression is found in the colonic epithelium. It is also abundant in the activated macrophages. Expressed in fetal membranes.

The protein resides in the cytoplasm. It localises to the nucleus. The protein localises to the secreted. In terms of biological role, galactose-specific lectin which binds IgE. May mediate with the alpha-3, beta-1 integrin the stimulation by CSPG4 of endothelial cells migration. Together with DMBT1, required for terminal differentiation of columnar epithelial cells during early embryogenesis. In the nucleus: acts as a pre-mRNA splicing factor. Involved in acute inflammatory responses including neutrophil activation and adhesion, chemoattraction of monocytes macrophages, opsonization of apoptotic neutrophils, and activation of mast cells. Together with TRIM16, coordinates the recognition of membrane damage with mobilization of the core autophagy regulators ATG16L1 and BECN1 in response to damaged endomembranes. In Homo sapiens (Human), this protein is Galectin-3.